Reading from the N-terminus, the 380-residue chain is Hydrogenase maturation factor HypD2 (380 aa).

Residues Cys36, Cys64, and Cys67 each coordinate Fe cation.

This sequence belongs to the HypD family. [4Fe-4S] cluster serves as cofactor.

Its pathway is protein modification; [NiFe] hydrogenase maturation. Functionally, involved in the maturation of [NiFe] hydrogenases. Involved in the biosynthesis of the Fe(CN)(2)CO cofactor. In Bradyrhizobium diazoefficiens (strain JCM 10833 / BCRC 13528 / IAM 13628 / NBRC 14792 / USDA 110), this protein is Hydrogenase maturation factor HypD2 (hypD2).